The chain runs to 254 residues: MEIDLNADLGEGCGSDEALLDLVTSANIACGWHAGGAQAMRDCVRWAVEKGVSIGAHPSFHDPENFGRKEMDLPASEIYAGVLYQLGALSAFAQAEGGRIAHVKPHGALYNQAAREPEIADAVVSAIHDFDPSLAVFGLAKSGFVDAARQAGLVAVEEVFADRGYRADGSLVPRSQPGALVDDENEMLARTLEMVRGQRVRAVTGEWVPLNAQTVCLHGDGPHALAFAKRIRDALEAAGIDVHAPGALHAGERA.

This sequence belongs to the LamB/PxpA family. Forms a complex composed of PxpA, PxpB and PxpC.

The catalysed reaction is 5-oxo-L-proline + ATP + 2 H2O = L-glutamate + ADP + phosphate + H(+). Functionally, catalyzes the cleavage of 5-oxoproline to form L-glutamate coupled to the hydrolysis of ATP to ADP and inorganic phosphate. This Burkholderia pseudomallei (strain K96243) protein is 5-oxoprolinase subunit A 1.